The chain runs to 482 residues: Spore germination protein A1 (482 aa).

A run of 6 helical transmembrane segments spans residues 242–262, 284–304, 321–341, 351–371, 373–393, and 406–426; these read VAIL…LGIL, FASI…VSFH, ENVP…IELL, PLGQ…AVEA, LVSS…FTVP, and FISM…FMLV.

This sequence belongs to the GerABKA family.

The protein localises to the cell membrane. In terms of biological role, forms a complex at the inner spore membrane which acts as a receptor for L-alanine, thus is involved in the stimulation of germination in response to alanine. Can stimulate germination in the absence of GerD and GerK gene products (fructose and glucose receptors, respectively), but the response is improved in their presence. This Bacillus subtilis (strain 168) protein is Spore germination protein A1 (gerAA).